Consider the following 180-residue polypeptide: MEVSHPAVHPVAVPPVLTEPPARVRMKDYQGMPGTLGGLALRLGQLGFAVLSFSIMVSTPDFSQVTAFCYLVAATVLQTLWSSITAVVDIYALSVRRSLHHSLLVGLFAVGDGVTSTLTFAAACATAGITVLIDNDLDECGQNHCGRFEAAAAMAFLSWIMAAPSFLLAFWSFGNKIVCF.

Over 1 to 36 (MEVSHPAVHPVAVPPVLTEPPARVRMKDYQGMPGTL) the chain is Cytoplasmic. Residues 37-57 (GGLALRLGQLGFAVLSFSIMV) traverse the membrane as a helical segment. The Extracellular portion of the chain corresponds to 58 to 67 (STPDFSQVTA). A helical membrane pass occupies residues 68–88 (FCYLVAATVLQTLWSSITAVV). Residues 89–102 (DIYALSVRRSLHHS) lie on the Cytoplasmic side of the membrane. Residues 103–123 (LLVGLFAVGDGVTSTLTFAAA) traverse the membrane as a helical segment. Over 124–150 (CATAGITVLIDNDLDECGQNHCGRFEA) the chain is Extracellular. A helical transmembrane segment spans residues 151–171 (AAAMAFLSWIMAAPSFLLAFW). The Cytoplasmic portion of the chain corresponds to 172–180 (SFGNKIVCF).

Belongs to the Casparian strip membrane proteins (CASP) family. As to quaternary structure, homodimer and heterodimers.

The protein localises to the cell membrane. This is CASP-like protein 5A1 from Pteridium aquilinum subsp. aquilinum (Bracken fern).